The following is a 442-amino-acid chain: Threonine/serine transporter TdcC (442 aa).

Helical transmembrane passes span 21–41, 44–64, 96–116, 139–159, 162–182, 206–226, 258–278, 312–332, 364–384, 388–408, and 422–442; these read TTWT…FFPI, GFGG…IAFL, GVVI…IYGV, VVAL…KDLM, VMSF…LSLI, ILVT…FSPI, ASIL…FTLS, ITLE…SFFG, LISM…NPNI, IEAM…MYAI, and ENYF…YKLL.

The protein belongs to the amino acid/polyamine transporter 2 family. SdaC/TdcC subfamily.

Its subcellular location is the cell inner membrane. The catalysed reaction is L-threonine(in) + H(+)(in) = L-threonine(out) + H(+)(out). The enzyme catalyses L-serine(in) + H(+)(in) = L-serine(out) + H(+)(out). Involved in the import of threonine and serine into the cell, with the concomitant import of a proton (symport system). This Yersinia enterocolitica serotype O:8 / biotype 1B (strain NCTC 13174 / 8081) protein is Threonine/serine transporter TdcC.